A 388-amino-acid chain; its full sequence is Acyl-CoA dehydrogenase fadE12 (388 aa).

It belongs to the acyl-CoA dehydrogenase family. FAD serves as cofactor.

The catalysed reaction is a 2,3-saturated acyl-CoA + A = a 2,3-dehydroacyl-CoA + AH2. The polypeptide is Acyl-CoA dehydrogenase fadE12 (fadE12) (Mycobacterium tuberculosis (strain CDC 1551 / Oshkosh)).